The chain runs to 776 residues: Cullin-1 (776 aa).

Omega-N-methylarginine is present on Arg-63. The Cullin neddylation domain maps to Asp-706–Asp-766. Lys-720 is covalently cross-linked (Glycyl lysine isopeptide (Lys-Gly) (interchain with G-Cter in NEDD8)).

This sequence belongs to the cullin family. As to quaternary structure, component of multiple Cul1-RING E3 ubiquitin-protein ligase complexes commonly known as SCF (SKP1-CUL1-F-box) complexes, consisting of CUL1, SKP1, RBX1 and a variable F-box domain-containing protein as substrate-specific subunit. Component of the SCF(FBXW11) complex containing FBXW11. Component of the SCF(SKP2) complex containing SKP2, in which it interacts directly with SKP1, SKP2 and RBX1. Component of the SCF(FBXW2) complex containing FBXW2. Component of the SCF(FBXO32) complex containing FBXO32. Component of the probable SCF(FBXO7) complex containing FBXO7. Component of the SCF(FBXO10) complex containing FBXO10. Component of the SCF(FBXO11) complex containing FBXO11. Component of the SCF(FBXO25) complex containing FBXO25. Component of the SCF(FBXO33) complex containing FBXO33. Component of the probable SCF(FBXO4) complex containing FBXO4. Component of the SCF(FBXO44) complex, composed of SKP1, CUL1 and FBXO44. Component of the SCF(BTRC) complex, composed of SKP1, CUL1 and BTRC. This complex binds phosphorylated NFKBIA. Part of a SCF complex consisting of CUL1, RBX1, SKP1 and FBXO2. Component of a SCF(SKP2)-like complex containing CUL1, SKP1, TRIM21 and SKP2. Component of the SCF(FBXO17) complex, composed of SKP1, CUL1 and FBXO17. Component of the SCF(FBXO27) complex, composed of SKP1, CUL1 and FBXO27. Component of the SCF(CCNF) complex consisting of CUL1, RBX1, SKP1 and CCNF. Interacts with CCNF. Component of the SCF(FBXL3) complex composed of CUL1, SKP1, RBX1 and FBXL3. Component of the SCF(FBXL21) complex composed of CUL1, SKP1, RBX1 and FBXL21. Component of the SCF(FBXO9) composed of CUL1, SKP1, RBX1 and FBXO9. Component of the SCF(FBXW7) composed of CUL1, SKP1, RBX1 and FBXW7. Component of the SCF(FBXO31) complex composed of CUL1, SKP1, RBX1 and FBXO31. Interacts with CHEK2; mediates CHEK2 ubiquitination and regulates its function. Part of a complex with TIP120A/CAND1 and RBX1. The unneddylated form interacts with TIP120A/CAND1 and the interaction mediates the exchange of the F-box substrate-specific subunit. Can self-associate. Interacts with FBXW8. Interacts with RNF7. Interacts with TRIM21. Interacts with COPS2. Interacts with DCUN1D1 and UBE2M. Interacts with DCUN1D3. Interacts with DCUN1D4. Identified in a complex with RBX1 and GLMN. Interacts with CEP68 as part of the SCF(FBXW11) complex; the interaction is probably mediated by FBXW11 and the complex also contains CDK5RAP2 and PCNT. Interacts (when neddylated) with ARIH1; leading to activate the E3 ligase activity of ARIH1. Interacts with COPS9. Interacts with UBXN1. Interacts with KAT7, probably as part of an SCF complex; the interaction mediates KAT7 ubiquitination. Interacts with NOTCH2. Part of a complex that contains DCUN1D5, CUL1 and RBX1; this interaction is bridged by CUL1. Interacts (unneddylated form) with DCUN1D1, DCUN1D2, DCUN1D3, DCUN1D4 and DCUN1D5; these interactions promote the cullin neddylation. Interacts (via the C-terminal domain) with CUL7; the interaction seems to be mediated by FBXW8; it is likely specific to FBXW8, but not other F-box proteins. Interacts with UBR2, as part of SCF(BTRC) complex; the interaction mediates 'Lys-48'-linked ubiquitination of UBR2 and is regulated by DUSP22 in the T-cell receptor signaling pathway. (Microbial infection) Interacts with murine cytomegalovirus M48. Neddylated; which enhances the ubiquitination activity of SCF. Neddylation prevents binding of the inhibitor CAND1. Neddylation leads to structural rearrangment in the complex that allows interaction between the E2 ubiquitin-conjugating enzyme and the acceptor ubiquitin. Deneddylated via its interaction with the COP9 signalosome (CSN) complex. Post-translationally, (Microbial infection) Deneddylated by murine cytomegalovirus M48 leading to a S-phase-like environment that is required for efficient replication of the viral genome. Embryo fibroblasts and embryo preadipocytes.

It functions in the pathway protein modification; protein ubiquitination. In terms of biological role, core component of multiple cullin-RING-based SCF (SKP1-CUL1-F-box protein) E3 ubiquitin-protein ligase complexes, which mediate the ubiquitination of proteins involved in cell cycle progression, signal transduction and transcription. SCF complexes and ARIH1 collaborate in tandem to mediate ubiquitination of target proteins. In the SCF complex, serves as a rigid scaffold that organizes the SKP1-F-box protein and RBX1 subunits. May contribute to catalysis through positioning of the substrate and the ubiquitin-conjugating enzyme. The E3 ubiquitin-protein ligase activity of the complex is dependent on the neddylation of the cullin subunit and exchange of the substrate recognition component is mediated by TIP120A/CAND1. The functional specificity of the SCF complex depends on the F-box protein as substrate recognition component. SCF(BTRC) and SCF(FBXW11) direct ubiquitination of CTNNB1 and participate in Wnt signaling. SCF(FBXW11) directs ubiquitination of phosphorylated NFKBIA. SCF(BTRC) directs ubiquitination of NFKBIB, NFKBIE, ATF4, SMAD3, SMAD4, CDC25A, FBXO5 and probably NFKB2. SCF(BTRC) and/or SCF(FBXW11) direct ubiquitination of CEP68. SCF(SKP2) directs ubiquitination of phosphorylated CDKN1B/p27kip and is involved in regulation of G1/S transition. SCF(SKP2) directs ubiquitination of ORC1, CDT1, RBL2, ELF4, CDKN1A, RAG2, FOXO1A, and probably MYC and TAL1. SCF(FBXW7) directs ubiquitination of cyclin E, NOTCH1 released notch intracellular domain (NICD), and probably PSEN1. SCF(FBXW2) directs ubiquitination of GCM1. SCF(FBXO32) directs ubiquitination of MYOD1. SCF(FBXO7) directs ubiquitination of BIRC2 and DLGAP5. SCF(FBXO33) directs ubiquitination of YBX1. SCF(FBXO1) directs ubiquitination of BCL6 and DTL but does not seem to direct ubiquitination of TP53. SCF(BTRC) mediates the ubiquitination of NFKBIA at 'Lys-21' and 'Lys-22'; the degradation frees the associated NFKB1-RELA dimer to translocate into the nucleus and to activate transcription. SCF(CCNF) directs ubiquitination of CCP110. SCF(FBXL3) and SCF(FBXL21) direct ubiquitination of CRY1 and CRY2. SCF(FBXO9) directs ubiquitination of TTI1 and TELO2. SCF(FBXO10) directs ubiquitination of BCL2. Neddylated CUL1-RBX1 ubiquitinates p53/TP53 recruited by Cul7-RING(FBXW8) complex. SCF(BTRC) directs 'Lys-48'-linked ubiquitination of UBR2 in the T-cell receptor signaling pathway. The SCF(FBXO31) protein ligase complex specifically mediates the ubiquitination of proteins amidated at their C-terminus in response to oxidative stress. The polypeptide is Cullin-1 (Cul1) (Mus musculus (Mouse)).